We begin with the raw amino-acid sequence, 2014 residues long: Fatty acid synthase beta subunit pigK (2014 aa).

An acetyltransferase (AT) domain region spans residues 144-515 (LAAVFGGQST…KDGQGVRVII (372 aa)). Residue serine 263 is the For acetyltransferase activity of the active site. Residues 570 to 815 (SRLLDTPPLM…LITEASGVSD (246 aa)) form an enoyl reductase (ER) domain region. Positions 1126–1606 (RSGSPWIHAL…LPGDRLLVNV (481 aa)) are dehydratase (DH) domain. Residues 1514-1627 (PGWPGVSSLE…FNVSAFKQAT (114 aa)) form the MaoC-like domain. Residues 1645–2005 (FFFTGQGSQK…VREVFNITQS (361 aa)) form a malonyl/palmitoyl transferase (MT/PT) domain region. Serine 1790 acts as the For malonyltransferase activity in catalysis.

Belongs to the fungal fatty acid synthetase subunit beta family. As to quaternary structure, [Alpha(6)beta(6)] hexamers of two multifunctional subunits (alpha and beta).

It catalyses the reaction acetyl-CoA + n malonyl-CoA + 2n NADPH + 4n H(+) = a long-chain-acyl-CoA + n CoA + n CO2 + 2n NADP(+).. The catalysed reaction is holo-[ACP] + acetyl-CoA = acetyl-[ACP] + CoA. It carries out the reaction holo-[ACP] + malonyl-CoA = malonyl-[ACP] + CoA. The enzyme catalyses a (3R)-hydroxyacyl-[ACP] = a (2E)-enoyl-[ACP] + H2O. It catalyses the reaction a 2,3-saturated acyl-[ACP] + NAD(+) = a (2E)-enoyl-[ACP] + NADH + H(+). The catalysed reaction is (9Z)-octadecenoyl-[ACP] + H2O = (9Z)-octadecenoate + holo-[ACP] + H(+). The protein operates within secondary metabolite biosynthesis. Functionally, fatty acid synthase subunit beta; part of the gene cluster that mediates the biosynthesis of azaphilone pigments (MonAzPs), a complex mixture of compounds with a common azaphilone skeleton very widely used as food colorants. PigJ and pigK form the two subunits of a dedicated fungal fatty acid synthase (FAS) that produces the side chain fatty acyl moiety of MonAzPs, a beta-keto fatty acid. The chain length control of the pigJ-pigK FAS is somewhat flexible as MonAzPs features either a beta-ketooctanoic or a beta-ketodecanoic acid moiety. The beta-ketoacyl-ACP probably serves as the substrate for the acetyltransferase pigD that directly transfers the fatty acyl chain to the C-4 alcohol of the pyran ring. The first step of the pathway is performed by the nrPKS pigA that forms the hexaketide precursor from successive condensations of five malonyl-CoA units, with a simple acetyl-CoA starter unit. The role of esterase pigG is not clear, but it may play at most a supplementary role in the formation of the benzaldehyde produced by the pigA nrPKS. This very reactive benzaldehyde is intercepted by the pigC ketoreductase that to provide the first stable enzyme-free MonAzPs intermediate, 6-(4-hydroxy-2-oxopentyl)-3-methyl-2,4-dioxocyclohexane carbaldehyde, also known as M7PKS-1. The FAD-dependent monooxygenase pigN hydroxylates M7PKS-1 at C-4, which triggers the formation of the pyran ring. PigJ, pigK and pigD are involved in the acetylation of the pyran ring. PigJ and pigK form the two subunits of a dedicated fungal FAS that produces the side chain fatty acyl moiety of MonAzPs and pigD transfers the fatty acyl chain to the C-4 alcohol. PigM and pigO are involved in the elimination of the omega-1 alcohol. PigM acts as an O-acetyltransferase that synthesizes the putative O-11 acetyl intermediate whereas pigO eliminates acetic acid to yield an intermediate with a C10(11) double bond. The dehydration of the C-11 alcohol followed by the reduction of the C6(7) double bond by the NAD(P)H-dependent oxidoreductase pigE increases the electrophilicity of the C-5 ketone of the resulting acyl benzopyran. This in turn sets up the C-5 ketone for an intramolecular Knoevenagel aldol condensation with the C-20 enol of the side chain. This condensation affords the characteristic linear tricyclic carbon skeletons of the yellow pigments that serve as the common precursors for the classical yellow pigments monascin and ankaflavin, orange pigments rubopunctatin and monascorubrin, and red pigments ribropunctamine and monascorubramine. The FAD-dependent oxidoreductase pigF is especially invoved in the biosynthesis of orange and red pigments via desaturation of C6(7). In Monascus ruber (Mold), this protein is Fatty acid synthase beta subunit pigK.